The chain runs to 813 residues: MRRALRLLPLPLSIAICLPAMAADKPLNWGLCPAVDPLPGFDGAPAADPKAAEMRQQLPTDIEGDQLSGTSTTPQYQGNVALKRGDQFLGADNLRMDTETGNYIAEGNVRYQDTSFRMVADRAEGNQDTDTHKVTNIQYQLVERRGNGDAESVDLQGQVGQMHRSTYTTCDPSQPIWRVRAPEIDVDNEEGFGTARNAVLQIGKVPVLYFPWFKFPIDDRRQTGLLFPQFGLSGRNGFDYLQPIYLNLAPNYDATLLPRYMSKRGFMFGTEFRYLYEGGRGEVTGNYLPNDKLRDKDRGSVFYSGYHNVNTHWQARSSISWVSDTRYVEDFTSRLNGMGSASSLQSTVGIYGTGETWTAGLMADRWQLTDYTLDEQALPYNRQPRAYFTWEKPFGIFEAGVYAEAVRFTHDDSYFVQPPSPSAPGETNNRDDNDEYVRTNIRNKEYGSGARLDVKPYISMPLSGAAWFLTPTVAWRYTAYQLDSTLANTAPLTGNRTPSRSLPIASLDAGLYFDRETSLFGTNYLNTLEPRMYYLYVPYRDQDDLPVFDTRPFTFSYGQLFRDTRYTGADRQNDANQLTLAVTSRWLRQDDGREKLSLSAGQILYFSDSLVTINNSNNSAAGSEQTVEQGKSAWVADANYMINDRWSMGATYQWNPNSRKEDLASLRTRYLLNNDGIINLAYRYRRNLTDNSDQLKQADFSFLYPINPSWSAVGRYYYSLLDRKPLEIIGGVQWDSCCLAVRGLVRRFVRNRDGEMDNSIQIEFVLKGLSSFGQNTDRTLRRAILGYYRDDLYLVPPSNTTTNPDDYDPNLIP.

The first 22 residues, 1-22 (MRRALRLLPLPLSIAICLPAMA), serve as a signal peptide directing secretion.

The protein belongs to the LptD family. As to quaternary structure, component of the lipopolysaccharide transport and assembly complex. Interacts with LptE and LptA.

It localises to the cell outer membrane. Together with LptE, is involved in the assembly of lipopolysaccharide (LPS) at the surface of the outer membrane. In Xanthomonas axonopodis pv. citri (strain 306), this protein is LPS-assembly protein LptD.